The primary structure comprises 229 residues: Large ribosomal subunit protein uL1 (229 aa).

This sequence belongs to the universal ribosomal protein uL1 family. Part of the 50S ribosomal subunit.

Its function is as follows. Binds directly to 23S rRNA. The L1 stalk is quite mobile in the ribosome, and is involved in E site tRNA release. In terms of biological role, protein L1 is also a translational repressor protein, it controls the translation of the L11 operon by binding to its mRNA. The protein is Large ribosomal subunit protein uL1 of Clostridium beijerinckii (strain ATCC 51743 / NCIMB 8052) (Clostridium acetobutylicum).